The chain runs to 244 residues: 3-deoxy-manno-octulosonate cytidylyltransferase (244 aa).

This sequence belongs to the KdsB family.

The protein localises to the cytoplasm. The catalysed reaction is 3-deoxy-alpha-D-manno-oct-2-ulosonate + CTP = CMP-3-deoxy-beta-D-manno-octulosonate + diphosphate. Its pathway is nucleotide-sugar biosynthesis; CMP-3-deoxy-D-manno-octulosonate biosynthesis; CMP-3-deoxy-D-manno-octulosonate from 3-deoxy-D-manno-octulosonate and CTP: step 1/1. It participates in bacterial outer membrane biogenesis; lipopolysaccharide biosynthesis. Functionally, activates KDO (a required 8-carbon sugar) for incorporation into bacterial lipopolysaccharide in Gram-negative bacteria. This chain is 3-deoxy-manno-octulosonate cytidylyltransferase, found in Dichelobacter nodosus (strain VCS1703A).